Reading from the N-terminus, the 127-residue chain is ATP synthase epsilon chain (127 aa).

Belongs to the ATPase epsilon chain family. In terms of assembly, F-type ATPases have 2 components, CF(1) - the catalytic core - and CF(0) - the membrane proton channel. CF(1) has five subunits: alpha(3), beta(3), gamma(1), delta(1), epsilon(1). CF(0) has three main subunits: a, b and c.

The protein resides in the cell inner membrane. Functionally, produces ATP from ADP in the presence of a proton gradient across the membrane. This is ATP synthase epsilon chain from Leptospira interrogans serogroup Icterohaemorrhagiae serovar copenhageni (strain Fiocruz L1-130).